A 76-amino-acid chain; its full sequence is MKLTCVLIIAVLFLMDNQLITADYPRDEQVYRAVRLRDAMQKSKGSGSCAYISEPCDILPCCPGLKCNEDFVPICL.

An N-terminal signal peptide occupies residues 1-22; sequence MKLTCVLIIAVLFLMDNQLITA. Residues 23–48 constitute a propeptide that is removed on maturation; sequence DYPRDEQVYRAVRLRDAMQKSKGSGS. 3 disulfides stabilise this stretch: cysteine 49-cysteine 62, cysteine 56-cysteine 67, and cysteine 61-cysteine 75.

Belongs to the conotoxin O1 superfamily. In terms of tissue distribution, expressed by the venom duct.

Its subcellular location is the secreted. The sequence is that of Conotoxin Lt6.1 from Conus litteratus (Lettered cone).